Reading from the N-terminus, the 997-residue chain is Translation initiation factor IF-2 (997 aa).

Residues 36–415 (SMAGSLTTEE…ATQPLKAAKR (380 aa)) form a disordered region. Basic and acidic residues-rich tracts occupy residues 45 to 65 (EAAR…ERSG) and 94 to 107 (AREE…EKPA). Residues 108–126 (AVEAPAQAEPVAEAPAASP) are compositionally biased toward low complexity. Over residues 127-147 (HKVEEKAAPEAAKAEPAEKAK) the composition is skewed to basic and acidic residues. Residues 151–162 (ARVVSAARVISR) show a composition bias toward low complexity. The segment covering 163–181 (PGEEEEKKPEPVVESKPEP) has biased composition (basic and acidic residues). Residues 182–196 (VAEISPVAAALAARE) show a composition bias toward low complexity. 2 stretches are compositionally biased toward basic and acidic residues: residues 197 to 214 (AAAR…EKGA) and 241 to 252 (PEARTEAWKDAD). The segment covering 300–309 (GRPGAPGGPR) has biased composition (gly residues). The segment covering 316 to 335 (PPRPGGPRPSGPGGPRPAGG) has biased composition (pro residues). Positions 378–388 (GGRRDDDDSQR) are enriched in basic and acidic residues. Residues 390 to 399 (NRGKGRRKGG) are compositionally biased toward basic residues. The tr-type G domain maps to 496–665 (PRPPVVTIMG…ALQSEIMELK (170 aa)). Residues 505–512 (GHVDHGKT) form a G1 region. A GTP-binding site is contributed by 505 to 512 (GHVDHGKT). Positions 530 to 534 (GITQH) are G2. The tract at residues 551-554 (DTPG) is G3. Residues 551-555 (DTPGH) and 605-608 (NKMD) each bind GTP. Residues 605–608 (NKMD) form a G4 region. The segment at 641–643 (AAK) is G5.

Belongs to the TRAFAC class translation factor GTPase superfamily. Classic translation factor GTPase family. IF-2 subfamily.

It localises to the cytoplasm. One of the essential components for the initiation of protein synthesis. Protects formylmethionyl-tRNA from spontaneous hydrolysis and promotes its binding to the 30S ribosomal subunits. Also involved in the hydrolysis of GTP during the formation of the 70S ribosomal complex. The protein is Translation initiation factor IF-2 of Desulfovibrio desulfuricans (strain ATCC 27774 / DSM 6949 / MB).